Consider the following 148-residue polypeptide: D-aminoacyl-tRNA deacylase (148 aa).

The Gly-cisPro motif, important for rejection of L-amino acids signature appears at Gly137 to Pro138.

This sequence belongs to the DTD family. As to quaternary structure, homodimer.

The protein resides in the cytoplasm. It carries out the reaction glycyl-tRNA(Ala) + H2O = tRNA(Ala) + glycine + H(+). It catalyses the reaction a D-aminoacyl-tRNA + H2O = a tRNA + a D-alpha-amino acid + H(+). An aminoacyl-tRNA editing enzyme that deacylates mischarged D-aminoacyl-tRNAs. Also deacylates mischarged glycyl-tRNA(Ala), protecting cells against glycine mischarging by AlaRS. Acts via tRNA-based rather than protein-based catalysis; rejects L-amino acids rather than detecting D-amino acids in the active site. By recycling D-aminoacyl-tRNA to D-amino acids and free tRNA molecules, this enzyme counteracts the toxicity associated with the formation of D-aminoacyl-tRNA entities in vivo and helps enforce protein L-homochirality. The protein is D-aminoacyl-tRNA deacylase of Lactiplantibacillus plantarum (strain ATCC BAA-793 / NCIMB 8826 / WCFS1) (Lactobacillus plantarum).